Consider the following 367-residue polypeptide: MTMEVVLIAVVVSVACALCGVFLVLRRISLMSDAISHSVILGIVLGYFLSRTLSSFVPFVGAVIAGICSVICAELLQKTGMVKSDAAVGLVFPAMFGLGVILVSLYAGNVHLDTDAVLLGEIGLAPLDRVSFFAWSLPRSLVQMGSVLCGLLLLLALFFKELKISTFDPVLATSLGFSPTLINYGLMLAVSITCVGAFDSVGAVLVIALMITPPAAALLLTDNLLLMLVLASLLASCASISGLFLAVKIDGSIAGAMATMAGVLFALVYLFSPKHGVVRRCLVMRALKLDLDVVTLAVHLATHRYTVERSVECAEVHLTEHVSWSARRAARVVRTALRRGMVERHGALLLLTAQGVSLAQARLDVSV.

9 helical membrane-spanning segments follow: residues valine 5–leucine 25, isoleucine 28–phenylalanine 48, phenylalanine 56–leucine 76, alanine 87–alanine 107, serine 140–lysine 160, valine 170–valine 190, valine 201–threonine 221, leucine 224–phenylalanine 244, and glycine 251–phenylalanine 271.

This sequence belongs to the ABC-3 integral membrane protein family.

It localises to the cell membrane. Part of an ATP-driven transport system TroABCD for zinc. The polypeptide is Zinc transport system membrane protein TroD (troD) (Treponema pallidum (strain Nichols)).